The chain runs to 334 residues: MLSRVAKRAFSSTVANPYKVTVLGAGGGIGQPLSLLLKLNHKVTDLRLYDLKGAKGVATDLSHIPTNSVVKGFTPEEPDGLNNALKDTDMVLIPAGVPRKPGMTRDDLFAINASIVRDLAAATAESAPNAAILVISNPVNSTVPIVAQVLKNKGVYNPKKLFGVTTLDSIRAARFISEVENTDPTQERVNVIGGHSGITIIPLISQTNHKLMSDDKRHELIHRIQFGGDEVVKAKNGAGSATLSMAHAGAKFANAVLSGFKGERDVIEPSFVDSPLFKSEGIEFFASPVTLGPDGIEKIHPIGELSSEEEEMLQKCKETLKKNIEKGVNFVASK.

Residues 1–17 constitute a mitochondrion transit peptide; sequence MLSRVAKRAFSSTVANP. NAD(+)-binding positions include 24–30 and Asp50; that span reads GAGGGIG. 2 residues coordinate substrate: Arg99 and Arg105. NAD(+) is bound by residues Asn112 and 135–137; that span reads ISN. Residues Asn137 and Arg171 each contribute to the substrate site. Ser177 is modified (phosphoserine). His195 functions as the Proton acceptor in the catalytic mechanism. Thr199 carries the post-translational modification Phosphothreonine. Position 245 (Met245) interacts with NAD(+).

The protein belongs to the LDH/MDH superfamily. MDH type 1 family. Homodimer.

The protein resides in the mitochondrion matrix. The catalysed reaction is (S)-malate + NAD(+) = oxaloacetate + NADH + H(+). This is Malate dehydrogenase, mitochondrial (MDH1) from Saccharomyces cerevisiae (strain ATCC 204508 / S288c) (Baker's yeast).